The following is a 418-amino-acid chain: Tryptophan synthase beta chain (418 aa).

Positions 1 to 12 (MTSTLPTANTPD) are enriched in polar residues. The tract at residues 1–21 (MTSTLPTANTPDPASLMPSVR) is disordered. Lys-111 bears the N6-(pyridoxal phosphate)lysine mark.

This sequence belongs to the TrpB family. As to quaternary structure, tetramer of two alpha and two beta chains. The cofactor is pyridoxal 5'-phosphate.

The catalysed reaction is (1S,2R)-1-C-(indol-3-yl)glycerol 3-phosphate + L-serine = D-glyceraldehyde 3-phosphate + L-tryptophan + H2O. The protein operates within amino-acid biosynthesis; L-tryptophan biosynthesis; L-tryptophan from chorismate: step 5/5. Its function is as follows. The beta subunit is responsible for the synthesis of L-tryptophan from indole and L-serine. The chain is Tryptophan synthase beta chain from Synechococcus sp. (strain CC9311).